The primary structure comprises 503 residues: 11-hydroxysugiol 20-monooxygenase (503 aa).

A helical membrane pass occupies residues 2–22; it reads QVLIVASLAFLAAWLVYSRWS. Cys446 contacts heme.

It belongs to the cytochrome P450 family. It depends on heme as a cofactor. Highly expressed in roots.

It is found in the membrane. The enzyme catalyses 11-hydroxysugiol + reduced [NADPH--hemoprotein reductase] + O2 = 11,20-dihydroxysugiol + oxidized [NADPH--hemoprotein reductase] + H2O + H(+). It catalyses the reaction 11-hydroxyferruginol + reduced [NADPH--hemoprotein reductase] + O2 = 11,20-dihydroxyferruginol + oxidized [NADPH--hemoprotein reductase] + H2O + H(+). Its pathway is secondary metabolite biosynthesis; terpenoid biosynthesis. Functionally, monooxygenase that oxidizes 11-hydroxysugiol to produce 11,20-dihydroxysugiol. Can oxidize 11-hydroxyferruginol to produce 11,20-dihydroxyferruginol. These products are intermediates in tanshinone biosynthesis. The protein is 11-hydroxysugiol 20-monooxygenase of Salvia miltiorrhiza (Chinese sage).